The sequence spans 257 residues: GTP cyclohydrolase FolE2 (257 aa).

The protein belongs to the GTP cyclohydrolase IV family.

It catalyses the reaction GTP + H2O = 7,8-dihydroneopterin 3'-triphosphate + formate + H(+). The protein operates within cofactor biosynthesis; 7,8-dihydroneopterin triphosphate biosynthesis; 7,8-dihydroneopterin triphosphate from GTP: step 1/1. Functionally, converts GTP to 7,8-dihydroneopterin triphosphate. The protein is GTP cyclohydrolase FolE2 of Syntrophobacter fumaroxidans (strain DSM 10017 / MPOB).